Reading from the N-terminus, the 37-residue chain is Cytochrome b6-f complex subunit 7 (37 aa).

The helical transmembrane segment at 11–29 threads the bilayer; the sequence is AVILMVLVLFGLAWGFLIL.

Belongs to the PetM family. In terms of assembly, the 4 large subunits of the cytochrome b6-f complex are cytochrome b6, subunit IV (17 kDa polypeptide, PetD), cytochrome f and the Rieske protein, while the 4 small subunits are PetG, PetL, PetM and PetN. The complex functions as a dimer.

The protein resides in the cellular thylakoid membrane. Its function is as follows. Component of the cytochrome b6-f complex, which mediates electron transfer between photosystem II (PSII) and photosystem I (PSI), cyclic electron flow around PSI, and state transitions. The polypeptide is Cytochrome b6-f complex subunit 7 (Crocosphaera subtropica (strain ATCC 51142 / BH68) (Cyanothece sp. (strain ATCC 51142))).